A 268-amino-acid chain; its full sequence is Holocytochrome c-type synthase (268 aa).

Low complexity predominate over residues 1-22 (MGLSPSAPAVAVQASNASASPP). Residues 1 to 25 (MGLSPSAPAVAVQASNASASPPSGC) form a disordered region. Residue glycine 2 is the site of N-myristoyl glycine attachment. 2 HRM repeats span residues 24 to 29 (GCPMHE) and 34 to 39 (GCPVNT).

This sequence belongs to the cytochrome c-type heme lyase family.

Its subcellular location is the mitochondrion inner membrane. It is found in the membrane. The catalysed reaction is holo-[cytochrome c] = apo-[cytochrome c] + heme b. Functionally, lyase that catalyzes the covalent linking of the heme group to the cytochrome C apoprotein to produce the mature functional cytochrome. The sequence is that of Holocytochrome c-type synthase from Homo sapiens (Human).